The following is a 2453-amino-acid chain: Nuclear receptor corepressor 1 (2453 aa).

The span at 1 to 29 (MSSSGYPPNQGAFSTEQSRYPSHSVQYTF) shows a compositional bias: polar residues. Disordered stretches follow at residues 1 to 116 (MSSS…QVSD), 147 to 177 (PAFG…SKLS), and 206 to 231 (QQQL…VEQK). The segment at 1 to 373 (MSSSGYPPNQ…QRGAGLSATI (373 aa)) is interaction with ZBTB33 and HEXIM1. The segment covering 51–64 (SQASQLLQQQQQQQ) has biased composition (low complexity). Composition is skewed to basic and acidic residues over residues 77–88 (PGSDRPQERRSG) and 99–116 (VDHD…QVSD). The residue at position 172 (S172) is a Phosphoserine. Residues 174 to 216 (SKLSKEELIQSMDRVDREIAKVEQQILKLKKKQQQLEEEAAKP) adopt a coiled-coil conformation. Over residues 212–221 (EAAKPPEPEK) the composition is skewed to basic and acidic residues. Position 224 is a phosphoserine (S224). An interaction with SIN3A/B region spans residues 254–312 (FEGLGPKVELPLYNQPSDTKVYHENIKTNQVMRKKLILFFKRRNHARKQREQKICQRYD). Residues 299-328 (ARKQREQKICQRYDQLMEAWEKKVDRIENN) are a coiled coil. Residues 435–486 (QFMNVWTDHEKEIFKDKFIQHPKNFGLIASYLERKSVPDCVLYYYLTKKNEN) form the SANT 1 domain. 2 disordered regions span residues 497–631 (KRRG…TEEE) and 677–908 (LLQQ…PERQ). A coiled-coil region spans residues 501 to 550 (RNQQIARPSQEEKVEEKEEDKAEKTEKKEEEKKDDEEKDDKEDSKETTKE). 2 stretches are compositionally biased toward basic and acidic residues: residues 509–531 (SQEE…KEEE) and 541–556 (KEDS…RTEA). Positions 592-604 (EAAAANAAAAATE) are enriched in low complexity. Positions 605 to 616 (EPPPPLPPPPEP) are enriched in pro residues. The 52-residue stretch at 622–673 (VETSRWTEEEMEVAKKGLVEHGRNWAAIAKMVGTKSEAQCKNFYFNYKRRHN) folds into the SANT 2 domain. The segment covering 697–707 (QCESVASTVSA) has biased composition (polar residues). The span at 708 to 727 (QEDEDIEASNEEENPEDSEG) shows a compositional bias: acidic residues. The span at 771-787 (TTDPAPCASPSSAVPTT) shows a compositional bias: low complexity. A compositionally biased stretch (basic and acidic residues) spans 851–885 (GEGDAKERDLESTSEKTEARDEDVVVAEQIERPEP). S1011 carries the post-translational modification Phosphoserine. The tract at residues 1034-1058 (VRLPTTRPTRPPPPLIPSSKTTVAS) is disordered. A Glycyl lysine isopeptide (Lys-Gly) (interchain with G-Cter in SUMO1); alternate cross-link involves residue K1117. K1117 is covalently cross-linked (Glycyl lysine isopeptide (Lys-Gly) (interchain with G-Cter in SUMO2); alternate). S1122 bears the Phosphoserine mark. K1195 is covalently cross-linked (Glycyl lysine isopeptide (Lys-Gly) (interchain with G-Cter in SUMO2)). 5 positions are modified to phosphoserine: S1206, S1207, S1274, S1292, and S1333. Position 1347 is an N6-acetyllysine (K1347). Residue T1378 is modified to Phosphothreonine. Residue K1400 forms a Glycyl lysine isopeptide (Lys-Gly) (interchain with G-Cter in SUMO2) linkage. Residue K1423 forms a Glycyl lysine isopeptide (Lys-Gly) (interchain with G-Cter in SUMO2); alternate linkage. K1423 is subject to N6-acetyllysine; alternate. Positions 1450 to 1544 (GEPVRARHTS…SIPAKSPVPG (95 aa)) are disordered. Phosphoserine is present on residues S1459 and S1481. The span at 1459 to 1469 (SVVSSGPSVLR) shows a compositional bias: polar residues. Positions 1495–1514 (VSYQNTISRGSPMMNRTSDV) are enriched in polar residues. The interval 1510-2453 (RTSDVSSSKS…QYETLSDSDD (944 aa)) is interaction with C1D. K1525 participates in a covalent cross-link: Glycyl lysine isopeptide (Lys-Gly) (interchain with G-Cter in SUMO2). S1598 is subject to Phosphoserine. Disordered stretches follow at residues 1697 to 1780 (RPYN…VRTQ) and 1902 to 1939 (ALPS…RTRG). Basic and acidic residues-rich tracts occupy residues 1718–1745 (AERE…RERI) and 1919–1937 (AGKD…ELRT). A CORNR box 1 motif is present at residues 1949–1953 (IDVII). Residues 1959–2060 (SDKDARERGS…SSQSEGMGQV (102 aa)) are disordered. The segment covering 1968 to 1979 (SQSSDSSSSLSS) has biased composition (low complexity). S1993 and S1997 each carry phosphoserine. The segment at 2050-2129 (PSSQSEGMGQ…QSQTVLHPRP (80 aa)) is ID1. Positions 2065-2068 (RLIT) are required for interaction with RARA in the absence of its ligand. The short motif at 2073–2077 (ICQII) is the CORNR box 2 element. A compositionally biased stretch (polar residues) spans 2088-2124 (SQASTSTFQTSPSALSSTPVRTKTSSRYSPESQSQTV). Residues 2088 to 2174 (SQASTSTFQT…SPPQGPAVHE (87 aa)) form a disordered region. S2116, S2134, S2150, S2165, and S2198 each carry phosphoserine. Basic and acidic residues predominate over residues 2138 to 2156 (LVDKSRGSRPGKSPERSHI). The ID2 stretch occupies residues 2226-2287 (IFRKLNSSGG…EDIIRKALMG (62 aa)). The CORNR box 3 signature appears at 2277 to 2281 (LEDII). The interval 2303 to 2396 (PVGIMPGSAS…RPSSTGSTQF (94 aa)) is disordered. A compositionally biased stretch (low complexity) spans 2310–2319 (SASTSVVTSS). A Phosphothreonine modification is found at T2412. S2449 and S2451 each carry phosphoserine.

The protein belongs to the N-CoR nuclear receptor corepressors family. As to quaternary structure, forms a large corepressor complex that contains SIN3A/B and histone deacetylases HDAC1 and HDAC2. This complex associates with the thyroid receptor (TR) and the retinoid acid receptor (RAR) in the absence of ligand. Interacts directly with RARA; the interaction is facilitated with RARA trimethylation. Component of the N-Cor repressor complex, at least composed of CBFA2T3, HEXIM1, NCOR1, NCOR2, HDAC3, TBL1X, TBL1XR1, CORO2A and GPS2. Interacts with ZBTB33; the interaction serves to recruit the N-CoR complex to promoter regions containing methylated CpG dinucleotides. Interacts with TRIM28 and KDM3A. Interacts (via the RD1 domain) with BAZ1A (via its N-terminal); the interaction corepresses a number of NCOR1-regulated genes. Interacts with BCL6, C1D, DACH1, HEXIM1, HDAC7, RORA, RORC, SAP30, SIAH2, SIN3A and SIN3B. May interact with DEAF1. Interacts with RXRA. Interacts with SETD5. Interacts with VDR. Interacts with ZBTB7A. Interacts with AR. Interacts with HDAC3. In terms of processing, ubiquitinated; mediated by SIAH2 and leading to its subsequent proteasomal degradation. In terms of tissue distribution, ubiquitous.

The protein localises to the nucleus. Mediates transcriptional repression by certain nuclear receptors. Part of a complex which promotes histone deacetylation and the formation of repressive chromatin structures which may impede the access of basal transcription factors. Participates in the transcriptional repressor activity produced by BCL6. Recruited by ZBTB7A to the androgen response elements/ARE on target genes, negatively regulates androgen receptor signaling and androgen-induced cell proliferation. Mediates the NR1D1-dependent repression and circadian regulation of TSHB expression. The NCOR1-HDAC3 complex regulates the circadian expression of the core clock gene ARTNL/BMAL1 and the genes involved in lipid metabolism in the liver. This Mus musculus (Mouse) protein is Nuclear receptor corepressor 1 (Ncor1).